The following is a 791-amino-acid chain: von Willebrand factor A domain-containing protein 2 (791 aa).

The signal sequence occupies residues 1 to 23; that stretch reads MPPLLLLPAIYMLLFFRVSPTIS. The VWFA 1 domain occupies 51–221; the sequence is DILFLLDGSH…DATNGLLSTL (171 aa). A glycan (N-linked (GlcNAc...) asparagine) is linked at Asn-146. The region spanning 295–332 is the EGF-like 1 domain; the sequence is PGPCDSQPCQNGGTCIPEGVDRYHCLCPLAFGGEVNCA. 3 disulfides stabilise this stretch: Cys-298-Cys-309, Cys-303-Cys-319, and Cys-321-Cys-331. 2 consecutive VWFA domains span residues 342 to 516 and 530 to 704; these read DVLF…QRRL and DLVF…IEWL. One can recognise an EGF-like 2 domain in the interval 711–747; it reads PVNLCKPSPCMNEGTCVLKNGSYRCECRGGWEGPHCE. 3 cysteine pairs are disulfide-bonded: Cys-715/Cys-726, Cys-720/Cys-735, and Cys-737/Cys-746. The tract at residues 762–791 is disordered; sequence HQEPAGLQGPTPSQQAPKHLRIGKALSSAK.

As to quaternary structure, forms monomers and multimers. In terms of tissue distribution, detected in uterus, kidney, and skin. Also detected in intestine and lung of adult mice, and in calvaria, femur, brain, heart, intestine, skeletal muscle, and lung of newborn mice.

Its subcellular location is the secreted. The chain is von Willebrand factor A domain-containing protein 2 (Vwa2) from Mus musculus (Mouse).